The primary structure comprises 316 residues: Transaldolase A (316 aa).

Lysine 131 serves as the catalytic Schiff-base intermediate with substrate.

Belongs to the transaldolase family. Type 1 subfamily. In terms of assembly, homodimer.

It localises to the cytoplasm. It catalyses the reaction D-sedoheptulose 7-phosphate + D-glyceraldehyde 3-phosphate = D-erythrose 4-phosphate + beta-D-fructose 6-phosphate. The protein operates within carbohydrate degradation; pentose phosphate pathway; D-glyceraldehyde 3-phosphate and beta-D-fructose 6-phosphate from D-ribose 5-phosphate and D-xylulose 5-phosphate (non-oxidative stage): step 2/3. Functionally, transaldolase is important for the balance of metabolites in the pentose-phosphate pathway. In Shigella flexneri, this protein is Transaldolase A.